We begin with the raw amino-acid sequence, 141 residues long: MSRLMIVLVVLLSLAVAGLFLVKHKNASLRASLDRANNVASGQQTTITMLKNQLHVALTRADKNELAQVALRQELENAAKREAQREKTITRLLNENEDFRRWYGADLPDAVRRLHQRPACTDASDCPQRMPESEPLPDAGQ.

A helical; Signal-anchor for type II membrane protein transmembrane segment spans residues 1 to 17 (MSRLMIVLVVLLSLAVA). The Periplasmic segment spans residues 18–141 (GLFLVKHKNA…ESEPLPDAGQ (124 aa)). The disordered stretch occupies residues 119–141 (ACTDASDCPQRMPESEPLPDAGQ).

Interacts (via C-terminus) with the spanin outer lipoprotein subunit (via C-terminus). Part of the spanin complex which spans the entire periplasmic space. The spanin complex is composed of spanin inner membrane subunit and spanin outer membrane subunit.

The protein resides in the host cell inner membrane. Its function is as follows. Component of the spanin complex that disrupts the host outer membrane and participates in cell lysis during virus exit. The spanin complex conducts the final step in host lysis by disrupting the outer membrane after holin and endolysin action have permeabilized the inner membrane and degraded the host peptidoglycans. Host outer membrane disruption is possibly due to local fusion between the inner and outer membrane performed by the spanin complex. In Escherichia phage P2 (Bacteriophage P2), this protein is Probable spanin, inner membrane subunit (lysB).